A 115-amino-acid chain; its full sequence is Double-headed protease inhibitor, submandibular gland (115 aa).

2 consecutive Kazal-like domains span residues 6–66 (IGRE…ACDI) and 67–115 (ECTE…HGEC). 6 cysteine pairs are disulfide-bonded: C12–C46, C24–C43, C32–C64, C68–C97, C75–C94, and C83–C115.

It is found in the secreted. Functionally, this inhibitor is composed of two homologous actively inhibiting halves: one which inhibits trypsin, the other which inhibits elastase. The polypeptide is Double-headed protease inhibitor, submandibular gland (Canis lupus familiaris (Dog)).